We begin with the raw amino-acid sequence, 583 residues long: NudC domain-containing protein 1 (583 aa).

Ser8 carries the post-translational modification Phosphoserine. Residues Ile273 to Val361 enclose the CS domain. Phosphoserine is present on Ser388.

In terms of tissue distribution, isoform 1 is specifically expressed in leukemias and a variety of solid tumor cell lines and is also detected in testis and heart. Isoform 2 is predominantly expressed in testis and weakly expressed in tumor cells.

It is found in the cytoplasm. Its subcellular location is the nucleus. In Homo sapiens (Human), this protein is NudC domain-containing protein 1.